Here is a 163-residue protein sequence, read N- to C-terminus: ATP synthase subunit b, sodium ion specific (163 aa).

A helical transmembrane segment spans residues 9-29 (VSIDINMFWQIINFLILMFFF).

The protein belongs to the ATPase B chain family. As to quaternary structure, F-type ATPases have 2 components, F(1) - the catalytic core - and F(0) - the membrane proton channel. F(1) has five subunits: alpha(3), beta(3), gamma(1), delta(1), epsilon(1). F(0) has three main subunits: a(1), b(2) and c(10-14). The alpha and beta chains form an alternating ring which encloses part of the gamma chain. F(1) is attached to F(0) by a central stalk formed by the gamma and epsilon chains, while a peripheral stalk is formed by the delta and b chains.

The protein localises to the cell inner membrane. Functionally, f(1)F(0) ATP synthase produces ATP from ADP in the presence of a proton or sodium gradient. F-type ATPases consist of two structural domains, F(1) containing the extramembraneous catalytic core and F(0) containing the membrane proton channel, linked together by a central stalk and a peripheral stalk. During catalysis, ATP synthesis in the catalytic domain of F(1) is coupled via a rotary mechanism of the central stalk subunits to proton translocation. Its function is as follows. Component of the F(0) channel, it forms part of the peripheral stalk, linking F(1) to F(0). In Ilyobacter tartaricus, this protein is ATP synthase subunit b, sodium ion specific (atpF).